The chain runs to 157 residues: Transcriptional repressor NrdR (157 aa).

Residues 1-21 (MRCPYCSSEDSQVKDSRPAED) form a disordered region. Residues 3–34 (CPYCSSEDSQVKDSRPAEDGNAIRRRRICPDC) fold into a zinc finger. Basic and acidic residues predominate over residues 11–21 (SQVKDSRPAED). The 91-residue stretch at 49 to 139 (LMIIKKTGRK…VYRDFSHAED (91 aa)) folds into the ATP-cone domain.

Belongs to the NrdR family. Requires Zn(2+) as cofactor.

Functionally, negatively regulates transcription of bacterial ribonucleotide reductase nrd genes and operons by binding to NrdR-boxes. This chain is Transcriptional repressor NrdR, found in Sinorhizobium fredii (strain NBRC 101917 / NGR234).